The chain runs to 975 residues: MSDHNVNSTFRKTLVELCETATWITSQVYAAKNLEKNDLITVDNKISALYPIAEKYDRSFRTTTVILDEELILKLENAASSLWNSLTIAMKAEKASDKYFNEVFCKCKIFATKLLSIHEALFRTNTNLLRNFKCYISSFKSASEYRFDDLITNTQQHSEKYLQIINENVESFSNEEKTEFKKLTFEFYLVNFQLYLSENDLDTANIYTAKVNITDNSKYMDADLLIELCRMIYNSTVMLKEINNPETQLVDVNIISFLKDVEKYLELPVENLKSHTDYSNLKYSVLIFMANCLVEGHPQASELEQCDHYLSLLQNEYPNKVDPFILAINLTKRRNIVNPAETIEEILMRMIMSVDVISNFQAVIASINDLSKMNTKFSIVCLDYLLINKLNSKNDSKFLGKAICSRFLITTQSKTMNDSEIAESLENFSTQMERIVSEPLTKHAISCIITLLWNTGKKLEKMEKYVVSIRFYKLALKDIISQNYSDRGKIQRALQVVYNKIEDYSNTVRVYQDMDEVDRQSPLCQLLMLQSFLADDKTEEALTCLQKIKSSEDEKSTDALILAVAECKRKTDLSVQGLLMIFDKLQSKSNSQTISSTSSSQTLSILRYTLQMIVKVSEEEPLETFINYLPTVQKLLQKAVEFLKTVKLLNQLPPDVEKEAIYQQSVAVNEIEWFASFSYNVAVKCLVDQSCESISEFPQYCIQFIDLIPVQDFTFPKMYHFTYWRFKATILQLIIAKEKAKQDQHQKDWDIYEKSEELVNSINVMKKSSEFKDGSSLEDRNTLHECFLEALTIHLESALMMPDQTRILDILKKTELYQDSRVDALLIDISSNMEDLPKGVLIEILETVLKRNMGPEVKERELCSWLRILLENAINLNHEVELRILDRVLKILNINQSSLQDTDGVLQTELETIATYCWNIGVNYIIKDNKSNGIVWCKHSMGFANMVNEGLQEQLYSLWESLASSANIDINSIAK.

This sequence belongs to the SPO22 family.

Involved in chromosome segregation during sporulation. This chain is Sporulation-specific protein 22 (SPO22), found in Saccharomyces cerevisiae (strain ATCC 204508 / S288c) (Baker's yeast).